The primary structure comprises 263 residues: Triosephosphate isomerase (263 aa).

10-12 (NWK) contacts substrate. His-104 acts as the Electrophile in catalysis. Residue Glu-176 is the Proton acceptor of the active site. Residues Gly-182, Ser-221, and 242–243 (GG) contribute to the substrate site.

The protein belongs to the triosephosphate isomerase family. In terms of assembly, homodimer.

Its subcellular location is the cytoplasm. It catalyses the reaction D-glyceraldehyde 3-phosphate = dihydroxyacetone phosphate. Its pathway is carbohydrate biosynthesis; gluconeogenesis. It participates in carbohydrate degradation; glycolysis; D-glyceraldehyde 3-phosphate from glycerone phosphate: step 1/1. Its function is as follows. Involved in the gluconeogenesis. Catalyzes stereospecifically the conversion of dihydroxyacetone phosphate (DHAP) to D-glyceraldehyde-3-phosphate (G3P). In Haemophilus influenzae (strain ATCC 51907 / DSM 11121 / KW20 / Rd), this protein is Triosephosphate isomerase.